The following is a 460-amino-acid chain: V-type ATP synthase beta chain (460 aa).

The protein belongs to the ATPase alpha/beta chains family.

In terms of biological role, produces ATP from ADP in the presence of a proton gradient across the membrane. The V-type beta chain is a regulatory subunit. The protein is V-type ATP synthase beta chain of Dictyoglomus turgidum (strain DSM 6724 / Z-1310).